The sequence spans 291 residues: Formamidopyrimidine-DNA glycosylase (291 aa).

Pro-2 (schiff-base intermediate with DNA) is an active-site residue. Glu-3 functions as the Proton donor in the catalytic mechanism. Lys-58 acts as the Proton donor; for beta-elimination activity in catalysis. Residues His-100, Arg-123, and Lys-166 each coordinate DNA. The FPG-type zinc finger occupies 257–291 (SVYGREGKECLQCGTPIIRILQSGRSSFYCSQCQK). Catalysis depends on Arg-281, which acts as the Proton donor; for delta-elimination activity.

The protein belongs to the FPG family. In terms of assembly, monomer. Zn(2+) serves as cofactor.

The enzyme catalyses Hydrolysis of DNA containing ring-opened 7-methylguanine residues, releasing 2,6-diamino-4-hydroxy-5-(N-methyl)formamidopyrimidine.. It carries out the reaction 2'-deoxyribonucleotide-(2'-deoxyribose 5'-phosphate)-2'-deoxyribonucleotide-DNA = a 3'-end 2'-deoxyribonucleotide-(2,3-dehydro-2,3-deoxyribose 5'-phosphate)-DNA + a 5'-end 5'-phospho-2'-deoxyribonucleoside-DNA + H(+). Functionally, involved in base excision repair of DNA damaged by oxidation or by mutagenic agents. Acts as a DNA glycosylase that recognizes and removes damaged bases. Has a preference for oxidized purines, such as 7,8-dihydro-8-oxoguanine (8-oxoG). Has AP (apurinic/apyrimidinic) lyase activity and introduces nicks in the DNA strand. Cleaves the DNA backbone by beta-delta elimination to generate a single-strand break at the site of the removed base with both 3'- and 5'-phosphates. This Bartonella tribocorum (strain CIP 105476 / IBS 506) protein is Formamidopyrimidine-DNA glycosylase.